Here is a 551-residue protein sequence, read N- to C-terminus: Putative transport protein NTHI0043 (551 aa).

5 helical membrane passes run 4–24, 28–48, 65–85, 95–115, and 157–177; these read IAIT…IGHW, GVGL…HFTN, FGLI…FFSS, AFAI…HKIA, and VSYA…MWLI. RCK C-terminal domains lie at 191-275 and 277-360; these read RFNA…IIGY and VDAP…VIGN. 6 consecutive transmembrane segments (helical) span residues 370-390, 402-424, 438-458, 463-483, 492-512, and 529-549; these read MLPV…PFYI, AGGP…LYWF, IVLF…DTLV, LEWM…TGIL, YLTI…LAFA, and VYPL…VLLW.

This sequence belongs to the AAE transporter (TC 2.A.81) family. YidE subfamily.

The protein resides in the cell membrane. This Haemophilus influenzae (strain 86-028NP) protein is Putative transport protein NTHI0043.